A 126-amino-acid chain; its full sequence is MTAIDVMWVGLGGGIGSLLRWWIGLSIGKVYKGNFPLGTFLINISGAFVIGYLSILFSVDWRDRYGDLMNTAVLTGILGGYTTFSSMQLDAAKLATARGRAIAAGYLIISVLVGLAAAAFGAWLAY.

Transmembrane regions (helical) follow at residues Met7–Ile27, Leu37–Phe57, Leu68–Met87, and Ala101–Gly121. The Na(+) site is built by Gly79 and Thr82.

Belongs to the fluoride channel Fluc/FEX (TC 1.A.43) family.

It is found in the cell inner membrane. It catalyses the reaction fluoride(in) = fluoride(out). With respect to regulation, na(+) is not transported, but it plays an essential structural role and its presence is essential for fluoride channel function. In terms of biological role, fluoride-specific ion channel. Important for reducing fluoride concentration in the cell, thus reducing its toxicity. The chain is Fluoride-specific ion channel FluC 3 from Yersinia pestis.